Consider the following 132-residue polypeptide: Fatty acid-binding protein (132 aa).

Residues arginine 107 and 127–129 (RNY) each bind (5Z,8Z,11Z,14Z)-eicosatetraenoate. (9Z)-octadecenoate contacts are provided by residues arginine 107 and 127-129 (RNY).

The protein belongs to the calycin superfamily. Fatty-acid binding protein (FABP) family.

Its subcellular location is the cytoplasm. In terms of biological role, may play a role in the transport of fatty acids. Binds to various fatty acids but not retinoids. The protein is Fatty acid-binding protein of Schistosoma japonicum (Blood fluke).